Here is a 388-residue protein sequence, read N- to C-terminus: 3-dehydroquinate synthase (388 aa).

This sequence belongs to the archaeal-type DHQ synthase family.

It catalyses the reaction 2-amino-2,3,7-trideoxy-D-lyxo-hept-6-ulosonate + NAD(+) + H2O = 3-dehydroquinate + NH4(+) + NADH + H(+). Its function is as follows. Catalyzes the oxidative deamination and cyclization of 2-amino-3,7-dideoxy-D-threo-hept-6-ulosonic acid (ADH) to yield 3-dehydroquinate (DHQ), which is fed into the canonical shikimic pathway of aromatic amino acid biosynthesis. The polypeptide is 3-dehydroquinate synthase (Natronomonas pharaonis (strain ATCC 35678 / DSM 2160 / CIP 103997 / JCM 8858 / NBRC 14720 / NCIMB 2260 / Gabara) (Halobacterium pharaonis)).